We begin with the raw amino-acid sequence, 378 residues long: Probable S-(hydroxymethyl)glutathione dehydrogenase 1 (378 aa).

C47 is a binding site for Zn(2+). NAD(+) is bound at residue H48. Positions 69, 70, 99, 102, 105, 113, and 176 each coordinate Zn(2+). NAD(+)-binding positions include 201 to 206 (GCGCVG), D225, 293 to 295 (IGV), and 318 to 320 (SAF).

The protein belongs to the zinc-containing alcohol dehydrogenase family. Class-III subfamily. Zn(2+) serves as cofactor.

The enzyme catalyses a primary alcohol + NAD(+) = an aldehyde + NADH + H(+). It catalyses the reaction a secondary alcohol + NAD(+) = a ketone + NADH + H(+). It carries out the reaction S-(hydroxymethyl)glutathione + NADP(+) = S-formylglutathione + NADPH + H(+). The catalysed reaction is S-(hydroxymethyl)glutathione + NAD(+) = S-formylglutathione + NADH + H(+). The enzyme catalyses S-nitrosoglutathione + NADH + H(+) = S-(hydroxysulfenamide)glutathione + NAD(+). In terms of biological role, oxidizes long-chain alcohols and, in the presence of glutathione, is able to oxidize formaldehyde. Also acts as a S-nitroso-glutathione reductase by catalyzing the NADH-dependent reduction of S-nitrosoglutathione, thereby regulating protein S-nitrosylation. This is Probable S-(hydroxymethyl)glutathione dehydrogenase 1 from Schizosaccharomyces pombe (strain 972 / ATCC 24843) (Fission yeast).